Here is a 416-residue protein sequence, read N- to C-terminus: Serine hydroxymethyltransferase (416 aa).

Residues leucine 121 and 125-127 (GHL) contribute to the (6S)-5,6,7,8-tetrahydrofolate site. An N6-(pyridoxal phosphate)lysine modification is found at lysine 229.

This sequence belongs to the SHMT family. In terms of assembly, homodimer. It depends on pyridoxal 5'-phosphate as a cofactor.

It is found in the cytoplasm. It catalyses the reaction (6R)-5,10-methylene-5,6,7,8-tetrahydrofolate + glycine + H2O = (6S)-5,6,7,8-tetrahydrofolate + L-serine. It functions in the pathway one-carbon metabolism; tetrahydrofolate interconversion. The protein operates within amino-acid biosynthesis; glycine biosynthesis; glycine from L-serine: step 1/1. Catalyzes the reversible interconversion of serine and glycine with tetrahydrofolate (THF) serving as the one-carbon carrier. This reaction serves as the major source of one-carbon groups required for the biosynthesis of purines, thymidylate, methionine, and other important biomolecules. Also exhibits THF-independent aldolase activity toward beta-hydroxyamino acids, producing glycine and aldehydes, via a retro-aldol mechanism. This is Serine hydroxymethyltransferase from Neisseria meningitidis serogroup A / serotype 4A (strain DSM 15465 / Z2491).